We begin with the raw amino-acid sequence, 178 residues long: Gamma-crystallin S (178 aa).

Serine 2 carries the N-acetylserine modification. The tract at residues 2–5 (SKTG) is N-terminal arm. Beta/gamma crystallin 'Greek key' domains follow at residues 6-44 (GKIS…RVEG) and 45-87 (GTWA…RAVH). Residues 88-93 (LSSGGQ) form a connecting peptide region. Beta/gamma crystallin 'Greek key' domains are found at residues 94–134 (AKIQ…KVVE) and 135–177 (GTWI…RRIV).

Belongs to the beta/gamma-crystallin family. Monomer.

In terms of biological role, crystallins are the dominant structural components of the vertebrate eye lens. In Mus musculus (Mouse), this protein is Gamma-crystallin S (Crygs).